The chain runs to 617 residues: Regulatory solute carrier protein family 1 member 1 (617 aa).

Residues 1–22 show a composition bias toward polar residues; the sequence is MSSLPTSDGFNHPARSSGQSPD. Disordered regions lie at residues 1-106, 155-181, and 217-237; these read MSSL…EITV, ENQNLSQVSDPQQHEEPGNEQYEVAQQ, and KGNGLPQNVDPPSAKKSIPSS. Basic and acidic residues-rich tracts occupy residues 43 to 52 and 66 to 83; these read SDSDRIEPKA and SEKKEHLSLQDLSDHASS. 2 stretches are compositionally biased toward polar residues: residues 89–103 and 155–165; these read TDQSPAMPMQNSSEE and ENQNLSQVSDP. The involved in post-transcriptional down-regulation of SLC5A1 stretch occupies residues 410-412; sequence QCP. Residues 571-611 enclose the UBA domain; that stretch reads IFPATDIDRILRAGFTLQEALGALHRVGGNADLALLVLLAK.

As to quaternary structure, interacts with YRDC. As to expression, expressed in small intestine, kidney and brain.

Its subcellular location is the cell membrane. The protein localises to the nucleus. It localises to the golgi apparatus. It is found in the trans-Golgi network. Functionally, mediates transcriptional and post-transcriptional regulation of SLC5A1. Inhibits a dynamin and PKC-dependent exocytotic pathway of SLC5A1. Also involved in transcriptional regulation of SLC22A2. Exhibits glucose-dependent, short-term inhibition of SLC5A1 and SLC22A2 by inhibiting the release of vesicles from the trans-Golgi network. The chain is Regulatory solute carrier protein family 1 member 1 (RSC1A1) from Homo sapiens (Human).